Reading from the N-terminus, the 253-residue chain is Adenosylcobinamide-GDP ribazoletransferase (253 aa).

The next 4 membrane-spanning stretches (helical) occupy residues 33–53, 106–126, 132–152, and 178–198; these read ISPI…YLIL, VGSG…VALL, LYTI…SLYI, and ILLL…FIIF.

Belongs to the CobS family. The cofactor is Mg(2+).

The protein resides in the cell membrane. The enzyme catalyses alpha-ribazole + adenosylcob(III)inamide-GDP = adenosylcob(III)alamin + GMP + H(+). It carries out the reaction alpha-ribazole 5'-phosphate + adenosylcob(III)inamide-GDP = adenosylcob(III)alamin 5'-phosphate + GMP + H(+). The protein operates within cofactor biosynthesis; adenosylcobalamin biosynthesis; adenosylcobalamin from cob(II)yrinate a,c-diamide: step 7/7. Joins adenosylcobinamide-GDP and alpha-ribazole to generate adenosylcobalamin (Ado-cobalamin). Also synthesizes adenosylcobalamin 5'-phosphate from adenosylcobinamide-GDP and alpha-ribazole 5'-phosphate. This chain is Adenosylcobinamide-GDP ribazoletransferase, found in Saccharolobus solfataricus (strain ATCC 35092 / DSM 1617 / JCM 11322 / P2) (Sulfolobus solfataricus).